The sequence spans 254 residues: Triosephosphate isomerase (254 aa).

12-14 (NWK) contacts substrate. H99 (electrophile) is an active-site residue. E169 (proton acceptor) is an active-site residue. Substrate is bound by residues G175, S214, and 235 to 236 (GG).

This sequence belongs to the triosephosphate isomerase family. Homodimer.

The protein resides in the cytoplasm. It carries out the reaction D-glyceraldehyde 3-phosphate = dihydroxyacetone phosphate. The protein operates within carbohydrate biosynthesis; gluconeogenesis. It participates in carbohydrate degradation; glycolysis; D-glyceraldehyde 3-phosphate from glycerone phosphate: step 1/1. Its function is as follows. Involved in the gluconeogenesis. Catalyzes stereospecifically the conversion of dihydroxyacetone phosphate (DHAP) to D-glyceraldehyde-3-phosphate (G3P). This is Triosephosphate isomerase from Bartonella tribocorum (strain CIP 105476 / IBS 506).